A 430-amino-acid polypeptide reads, in one-letter code: Asparagine--tRNA ligase (430 aa).

This sequence belongs to the class-II aminoacyl-tRNA synthetase family.

The protein resides in the cytoplasm. The enzyme catalyses tRNA(Asn) + L-asparagine + ATP = L-asparaginyl-tRNA(Asn) + AMP + diphosphate + H(+). This is Asparagine--tRNA ligase from Thermococcus gammatolerans (strain DSM 15229 / JCM 11827 / EJ3).